The following is a 234-amino-acid chain: Adenylate dimethylallyltransferase (234 aa).

It belongs to the isopentenyl transferase family.

The enzyme catalyses dimethylallyl diphosphate + AMP = N(6)-(dimethylallyl)adenosine 5'-phosphate + diphosphate. Its function is as follows. Transfers dimethylallyl groups to AMP as part of the biosynthesis of cytokinin phytohormones. In Pseudomonas savastanoi (Pseudomonas syringae pv. savastanoi), this protein is Adenylate dimethylallyltransferase (ptz).